We begin with the raw amino-acid sequence, 314 residues long: Glucocorticoid receptor (314 aa).

The interval 1-44 is disordered; it reads ASAAVSAAPTEKEFPKTHSDVSSEQQNLKGQKGSNGGSMKLHTT. The segment at 1–281 is modulating; it reads ASAAVSAAPT…SAATGPPPKL (281 aa). Residues 10–21 show a composition bias toward basic and acidic residues; it reads TEKEFPKTHSDV. 3 positions are modified to phosphoserine: serine 65, serine 73, and serine 88. Lysine 120 is covalently cross-linked (Glycyl lysine isopeptide (Lys-Gly) (interchain with G-Cter in SUMO2)). At serine 129 the chain carries Phosphoserine. Residues lysine 139 and lysine 155 each participate in a glycyl lysine isopeptide (Lys-Gly) (interchain with G-Cter in SUMO); alternate cross-link. Residues lysine 139 and lysine 155 each participate in a glycyl lysine isopeptide (Lys-Gly) (interchain with G-Cter in SUMO2); alternate cross-link. Phosphoserine is present on serine 266. Lysine 280 participates in a covalent cross-link: Glycyl lysine isopeptide (Lys-Gly) (interchain with G-Cter in ubiquitin). The segment at 282-314 adopts an NR C4-type zinc-finger fold; it reads CLVCSDEASGCHYGVLTCGSCKVFFKRAVEGQH. A DNA-binding region (nuclear receptor) is located at residues 282–314; it reads CLVCSDEASGCHYGVLTCGSCKVFFKRAVEGQH.

The protein belongs to the nuclear hormone receptor family. NR3 subfamily. In terms of assembly, heteromultimeric cytoplasmic complex with HSP90AA1, HSPA1A/HSPA1B, and FKBP5 or another immunophilin such as PPID, STIP1, or the immunophilin homolog PPP5C. Upon ligand binding FKBP5 dissociates from the complex and FKBP4 takes its place, thereby linking the complex to dynein and mediating transport to the nucleus, where the complex dissociates. Probably forms a complex composed of chaperones HSP90 and HSP70, co-chaperones CDC37, PPP5C, TSC1 and client protein TSC2, CDK4, AKT, RAF1 and NR3C1; this complex does not contain co-chaperones STIP1/HOP and PTGES3/p23. Directly interacts with UNC45A. Binds to DNA as a homodimer, and as heterodimer with NR3C2 or the retinoid X receptor. Binds STAT5A and STAT5B homodimers and heterodimers. Interacts with NRIP1, POU2F1, POU2F2 and TRIM28. Interacts with several coactivator complexes, including the SMARCA4 complex, CREBBP/EP300, TADA2L (Ada complex) and p160 coactivators such as NCOA2 and NCOA6. Interaction with BAG1 inhibits transactivation. Interacts with HEXIM1 and TGFB1I1. Interacts with NCOA1. Interacts with NCOA3, SMARCA4, SMARCC1, SMARCD1, and SMARCE1. Interacts with CLOCK, CRY1 and CRY2 in a ligand-dependent fashion. Interacts with CIART. Interacts with RWDD3. Interacts with UBE2I/UBC9 and this interaction is enhanced in the presence of RWDD3. Interacts with GRIP1. Interacts with NR4A3 (via nuclear receptor DNA-binding domain), represses transcription activity of NR4A3 on the POMC promoter Nur response element (NurRE). Directly interacts with PNRC2 to attract and form a complex with UPF1 and DCP1A; the interaction leads to rapid mRNA degradation. Interacts with GSK3B. Interacts with FNIP1 and FNIP2. Interacts (via C-terminus) with HNRNPU (via C-terminus). Interacts with MCM3AP. Interacts (via domain NR LBD) with HSP90AA1 and HSP90AB1. In the absence of hormonal ligand, interacts with TACC1. Interacts (via NR LBD domain) with ZNF764 (via KRAB domain); the interaction regulates transcription factor activity of NR3C1 by directing its actions toward certain biologic pathways. In terms of processing, acetylation by CLOCK reduces its binding to glucocorticoid response elements and its transcriptional activity. Post-translationally, increased proteasome-mediated degradation in response to glucocorticoids. Phosphorylated in the absence of hormone; becomes hyperphosphorylated in the presence of glucocorticoid. The Ser-65, Ser-88 and Ser-266-phosphorylated forms are mainly cytoplasmic, and the Ser-73-phosphorylated form is nuclear. Phosphorylation at Ser-73 increases transcriptional activity. Phosphorylation at Ser-65, Ser-88 and Ser-266 decreases signaling capacity. Phosphorylation at Ser-266 may protect from glucocorticoid-induced apoptosis. Phosphorylation at Ser-65 and Ser-73 is not required in regulation of chromosome segregation. May be dephosphorylated by PPP5C, attenuates NR3C1 action. In terms of processing, ubiquitinated by UBR5, leading to its degradation: UBR5 specifically recognizes and binds ligand-bound NR3C1 when it is not associated with coactivators (NCOAs). In presence of NCOAs, the UBR5-degron is not accessible, preventing its ubiquitination and degradation. Post-translationally, sumoylation at Lys-139 and Lys-155 negatively regulates its transcriptional activity. Heat shock increases sumoylation in a RWDD3-dependent manner.

The protein localises to the cytoplasm. Its subcellular location is the nucleus. It localises to the mitochondrion. The protein resides in the cytoskeleton. It is found in the spindle. The protein localises to the microtubule organizing center. Its subcellular location is the centrosome. It localises to the chromosome. The protein resides in the nucleoplasm. In terms of biological role, receptor for glucocorticoids (GC). Has a dual mode of action: as a transcription factor that binds to glucocorticoid response elements (GRE), both for nuclear and mitochondrial DNA, and as a modulator of other transcription factors. Affects inflammatory responses, cellular proliferation and differentiation in target tissues. Involved in chromatin remodeling. Plays a role in rapid mRNA degradation by binding to the 5' UTR of target mRNAs and interacting with PNRC2 in a ligand-dependent manner which recruits the RNA helicase UPF1 and the mRNA-decapping enzyme DCP1A, leading to RNA decay. Could act as a coactivator for STAT5-dependent transcription upon growth hormone (GH) stimulation and could reveal an essential role of hepatic GR in the control of body growth. Mediates glucocorticoid-induced apoptosis. Promotes accurate chromosome segregation during mitosis. May act as a tumor suppressor. May play a negative role in adipogenesis through the regulation of lipolytic and antilipogenic gene expression. The sequence is that of Glucocorticoid receptor (NR3C1) from Ovis aries (Sheep).